A 293-amino-acid polypeptide reads, in one-letter code: ATP synthase subunit a (293 aa).

The next 6 membrane-spanning stretches (helical) occupy residues Asp-40–Ala-60, Phe-98–Leu-118, Asp-151–Ile-171, Phe-188–Ile-208, Met-225–Phe-245, and Ala-264–Val-284.

It belongs to the ATPase A chain family. In terms of assembly, F-type ATPases have 2 components, CF(1) - the catalytic core - and CF(0) - the membrane proton channel. CF(1) has five subunits: alpha(3), beta(3), gamma(1), delta(1), epsilon(1). CF(0) has three main subunits: a(1), b(2) and c(9-12). The alpha and beta chains form an alternating ring which encloses part of the gamma chain. CF(1) is attached to CF(0) by a central stalk formed by the gamma and epsilon chains, while a peripheral stalk is formed by the delta and b chains.

It localises to the cell inner membrane. In terms of biological role, key component of the proton channel; it plays a direct role in the translocation of protons across the membrane. The chain is ATP synthase subunit a from Bordetella avium (strain 197N).